Reading from the N-terminus, the 174-residue chain is Dual-action ribosomal maturation protein DarP (174 aa).

The protein belongs to the DarP family.

It is found in the cytoplasm. Member of a network of 50S ribosomal subunit biogenesis factors which assembles along the 30S-50S interface, preventing incorrect 23S rRNA structures from forming. Promotes peptidyl transferase center (PTC) maturation. This chain is Dual-action ribosomal maturation protein DarP, found in Vibrio atlanticus (strain LGP32) (Vibrio splendidus (strain Mel32)).